The chain runs to 678 residues: SPS-sensor component PTR3 (678 aa).

2 disordered regions span residues 111–158 (TGQG…SDPT) and 179–211 (ANTE…SSLL). Over residues 127-144 (TSPSSSSLSLTPSRSSST) the composition is skewed to low complexity. Positions 149–158 (ADNKTLSDPT) are enriched in basic and acidic residues. Residues 179-194 (ANTEVGSDHPLTTGTT) show a composition bias toward polar residues.

In terms of assembly, homodimer. Component of the plasma membrane SPS (SSY1-PTR3-SSY5) amino acid sensor complex. Interacts directly with SSY1 and SSY5. In terms of processing, hyperphosphorylated in response to extracellular amino acids and dependent on the amino acid sensor component SSY1. Phosphorylation is positively regulated by casein kinases YCK1 and YCK2, and negatively regulated by phosphatase PP2A regulatory subunit RTS1.

It localises to the cell membrane. In terms of biological role, component of the SPS-sensor system, which regulates the expression of several amino acid-metabolizing enzymes and amino acid- and peptide-permeases in response to extracellular amino acid levels by controlling the activity of two transcription factors, STP1 and STP2. This is SPS-sensor component PTR3 (PTR3) from Saccharomyces cerevisiae (strain ATCC 204508 / S288c) (Baker's yeast).